Consider the following 337-residue polypeptide: Low-density lipoprotein receptor class A domain-containing protein 3 (337 aa).

An N-terminal signal peptide occupies residues 1-13; that stretch reads MWLLYLILGSVES. Over 14 to 169 the chain is Extracellular; that stretch reads QLLPGNNHTT…NQLLYYPSIT (156 aa). The N-linked (GlcNAc...) asparagine glycan is linked to Asn20. LDL-receptor class A domains lie at 24–61, 66–103, and 108–144; these read ECNI…KECP, RCGP…ENCT, and LCSN…EHCH. 9 disulfide bridges follow: Cys25–Cys38, Cys33–Cys51, Cys45–Cys60, Cys67–Cys80, Cys74–Cys93, Cys87–Cys102, Cys109–Cys121, Cys116–Cys134, and Cys128–Cys143. The N-linked (GlcNAc...) asparagine glycan is linked to Asn101. A helical transmembrane segment spans residues 170–190; sequence YTIIGSSVIFVLVVALLALVL. Over 191 to 337 the chain is Cytoplasmic; that stretch reads HHQRKRNLMS…DDLPSTEVDV (147 aa). The segment covering 243–253 has biased composition (polar residues); that stretch reads QQPVSVESPPS. The segment at 243–337 is disordered; sequence QQPVSVESPP…DDLPSTEVDV (95 aa). Positions 291-303 are enriched in low complexity; the sequence is RSRTGSSASAGST.

Belongs to the LDLR family.

The protein localises to the cell membrane. The sequence is that of Low-density lipoprotein receptor class A domain-containing protein 3 from Xenopus tropicalis (Western clawed frog).